We begin with the raw amino-acid sequence, 367 residues long: Eukaryotic translation initiation factor 3 subunit H (367 aa).

Positions 14 to 166 (VQVEALVVMK…LRAFRLSPTF (153 aa)) constitute an MPN domain.

It belongs to the eIF-3 subunit H family. Component of the eukaryotic translation initiation factor 3 (eIF-3) complex.

It localises to the cytoplasm. Its function is as follows. Component of the eukaryotic translation initiation factor 3 (eIF-3) complex, which is involved in protein synthesis of a specialized repertoire of mRNAs and, together with other initiation factors, stimulates binding of mRNA and methionyl-tRNAi to the 40S ribosome. The eIF-3 complex specifically targets and initiates translation of a subset of mRNAs involved in cell proliferation. The chain is Eukaryotic translation initiation factor 3 subunit H from Botryotinia fuckeliana (strain B05.10) (Noble rot fungus).